Reading from the N-terminus, the 255-residue chain is Folate receptor alpha (255 aa).

An N-terminal signal peptide occupies residues 1 to 24; it reads MAHLMTVQLLLLVMWMAECAQSRA. Cystine bridges form between C35–C63, C55–C103, C64–C107, C87–C173, C94–C144, C133–C207, C137–C187, and C150–C167. N67 is a glycosylation site (N-linked (GlcNAc...) asparagine). Folate contacts are provided by residues D101, Y105, 122–126, 155–160, and S194; these read WRKER and HKGWNW. An N-linked (GlcNAc...) asparagine glycan is attached at N159. N-linked (GlcNAc...) asparagine glycosylation is present at N199. S232 carries GPI-anchor amidated serine lipidation. Positions 233 to 255 are cleaved as a propeptide — removed in mature form; sequence GAGFHGTWPLLCSLSLVLLWVIS.

The protein belongs to the folate receptor family. The secreted form is derived from the membrane-bound form either by cleavage of the GPI anchor, or/and by proteolysis catalyzed by a metalloprotease. As to expression, detected in kidney proximal tubules (at protein level).

Its subcellular location is the cell membrane. It localises to the apical cell membrane. The protein localises to the basolateral cell membrane. The protein resides in the secreted. It is found in the cytoplasmic vesicle. Its subcellular location is the clathrin-coated vesicle. It localises to the endosome. Binds to folate and reduced folic acid derivatives and mediates delivery of 5-methyltetrahydrofolate and folate analogs into the interior of cells. Has high affinity for folate and folic acid analogs at neutral pH. Exposure to slightly acidic pH after receptor endocytosis triggers a conformation change that strongly reduces its affinity for folates and mediates their release. Required for normal embryonic development and normal cell proliferation. Required for renal folate reabsorption. This Mus musculus (Mouse) protein is Folate receptor alpha (Folr1).